A 206-amino-acid polypeptide reads, in one-letter code: Large ribosomal subunit protein uL4 (206 aa).

Residues 63 to 85 are disordered; it reads MYKQKGTGSARHGSARAPQFRGG.

It belongs to the universal ribosomal protein uL4 family. Part of the 50S ribosomal subunit.

Functionally, one of the primary rRNA binding proteins, this protein initially binds near the 5'-end of the 23S rRNA. It is important during the early stages of 50S assembly. It makes multiple contacts with different domains of the 23S rRNA in the assembled 50S subunit and ribosome. Forms part of the polypeptide exit tunnel. The chain is Large ribosomal subunit protein uL4 from Beijerinckia indica subsp. indica (strain ATCC 9039 / DSM 1715 / NCIMB 8712).